Here is a 553-residue protein sequence, read N- to C-terminus: ATP synthase F(1) complex subunit alpha, mitochondrial (553 aa).

A mitochondrion-targeting transit peptide spans 1–43 (MLSVRVAAAVVRALPRRAGLVSRNALGSSFIAARNFHASNTHL). S53 and S65 each carry phosphoserine. S76 carries the phosphoserine; alternate modification. A glycan (O-linked (GlcNAc) serine; alternate) is linked at S76. S106 is subject to Phosphoserine. N6-acetyllysine is present on residues K123, K126, and K132. T134 is modified (phosphothreonine). Position 161 is an N6-acetyllysine; alternate (K161). K161 is modified (N6-succinyllysine; alternate). S166 is modified (phosphoserine). K167 is modified (N6-acetyllysine; alternate). At K167 the chain carries N6-succinyllysine; alternate. A Phosphoserine modification is found at S184. An Omega-N-methylarginine modification is found at R204. Positions 215, 217, 218, 219, and 220 each coordinate ATP. Mg(2+) is bound at residue T219. 2 positions are modified to N6-acetyllysine; alternate: K230 and K239. Residues K230 and K239 each carry the N6-succinyllysine; alternate modification. An N6-acetyllysine modification is found at K240. An N6-acetyllysine; alternate mark is found at K261 and K305. Residues K261 and K305 each carry the N6-succinyllysine; alternate modification. D312 is a Mg(2+) binding site. K427 bears the N6-acetyllysine; alternate mark. Residue K427 is modified to N6-succinyllysine; alternate. Position 434 is an N6-acetyllysine (K434). Residues Q473 and Q475 each contribute to the ATP site. An N6-acetyllysine; alternate mark is found at K498, K506, K531, and K539. K498, K506, K531, and K539 each carry N6-succinyllysine; alternate. K541 is subject to N6-acetyllysine.

This sequence belongs to the ATPase alpha/beta chains family. In terms of assembly, homotrimer. Component of the ATP synthase complex composed at least of ATP5F1A/subunit alpha, ATP5F1B/subunit beta, ATP5MC1/subunit c (homooctomer), MT-ATP6/subunit a, MT-ATP8/subunit 8, ATP5ME/subunit e, ATP5MF/subunit f, ATP5MG/subunit g, ATP5MK/subunit k, ATP5MJ/subunit j, ATP5F1C/subunit gamma, ATP5F1D/subunit delta, ATP5F1E/subunit epsilon, ATP5PF/subunit F6, ATP5PB/subunit b, ATP5PD/subunit d, ATP5PO/subunit OSCP. ATP synthase complex consists of a soluble F(1) head domain (subunits alpha(3) and beta(3)) - the catalytic core - and a membrane F(0) domain - the membrane proton channel (subunits c, a, 8, e, f, g, k and j). These two domains are linked by a central stalk (subunits gamma, delta, and epsilon) rotating inside the F1 region and a stationary peripheral stalk (subunits F6, b, d, and OSCP). Interacts with ATPAF2. Interacts with HRG; the interaction occurs on the surface of T-cells and alters the cell morphology when associated with concanavalin (in vitro). Interacts with PLG (angiostatin peptide); the interaction inhibits most of the angiogenic properties of angiostatin. Interacts with BLOC1S1. Interacts with BCL2L1 isoform BCL-X(L); the interaction mediates the association of BCL2L1 isoform BCL-X(L) with the mitochondrial membrane F(1)F(0) ATP synthase and enhances neurons metabolic efficiency. Interacts with CLN5 and PPT1. Interacts with S100A1; this interaction increases F1-ATPase activity. Interacts with ABCB7; this interaction allows the regulation of cellular iron homeostasis and cellular reactive oxygen species (ROS) levels in cardiomyocytes. In terms of processing, acetylated on lysine residues. BLOC1S1 is required for acetylation.

The protein localises to the mitochondrion inner membrane. It localises to the cell membrane. In terms of biological role, subunit alpha, of the mitochondrial membrane ATP synthase complex (F(1)F(0) ATP synthase or Complex V) that produces ATP from ADP in the presence of a proton gradient across the membrane which is generated by electron transport complexes of the respiratory chain. ATP synthase complex consist of a soluble F(1) head domain - the catalytic core - and a membrane F(1) domain - the membrane proton channel. These two domains are linked by a central stalk rotating inside the F(1) region and a stationary peripheral stalk. During catalysis, ATP synthesis in the catalytic domain of F(1) is coupled via a rotary mechanism of the central stalk subunits to proton translocation. In vivo, can only synthesize ATP although its ATP hydrolase activity can be activated artificially in vitro. With the catalytic subunit beta (ATP5F1B), forms the catalytic core in the F(1) domain. Subunit alpha does not bear the catalytic high-affinity ATP-binding sites. The protein is ATP synthase F(1) complex subunit alpha, mitochondrial of Pongo abelii (Sumatran orangutan).